We begin with the raw amino-acid sequence, 215 residues long: N-(5'-phosphoribosyl)anthranilate isomerase (215 aa).

It belongs to the TrpF family.

It catalyses the reaction N-(5-phospho-beta-D-ribosyl)anthranilate = 1-(2-carboxyphenylamino)-1-deoxy-D-ribulose 5-phosphate. Its pathway is amino-acid biosynthesis; L-tryptophan biosynthesis; L-tryptophan from chorismate: step 3/5. This chain is N-(5'-phosphoribosyl)anthranilate isomerase, found in Ruegeria sp. (strain TM1040) (Silicibacter sp.).